Reading from the N-terminus, the 99-residue chain is uncharacterized protein (99 aa).

The segment at 1 to 99 is disordered; sequence MSDFPPSYQQ…KYHSKSDVGF (99 aa). Positions 19 to 29 are enriched in polar residues; sequence QESSTSNNASE.

This is an uncharacterized protein from Schizosaccharomyces pombe (strain 972 / ATCC 24843) (Fission yeast).